The primary structure comprises 393 residues: DNA polymerase processivity factor (393 aa).

Disordered stretches follow at residues 25–50 (EMER…REPP), 311–339 (ESRF…ALAS), and 355–393 (KNGT…RCVV). The segment covering 31–41 (RDHHRDHRDHR) has biased composition (basic residues). Basic and acidic residues predominate over residues 311–333 (ESRFERMGKQDDGKGDRSHKNDD).

The protein belongs to the herpesviridae polymerase accessory protein family.

In terms of biological role, accessory subunit of the DNA polymerase that acts to increase the processivity of polymerization. The protein is DNA polymerase processivity factor (U27) of Human herpesvirus 6A (strain Uganda-1102) (HHV-6 variant A).